A 491-amino-acid chain; its full sequence is Glucose-6-phosphate 1-dehydrogenase (491 aa).

NADP(+) contacts are provided by residues Arg-50, 92 to 93 (DV), and Lys-147. The substrate site is built by His-177, Lys-181, Glu-215, and Asp-234. Residue His-239 is the Proton acceptor of the active site. Substrate-binding residues include Lys-339 and Lys-344.

The protein belongs to the glucose-6-phosphate dehydrogenase family.

The catalysed reaction is D-glucose 6-phosphate + NADP(+) = 6-phospho-D-glucono-1,5-lactone + NADPH + H(+). It functions in the pathway carbohydrate degradation; pentose phosphate pathway; D-ribulose 5-phosphate from D-glucose 6-phosphate (oxidative stage): step 1/3. Functionally, catalyzes the oxidation of glucose 6-phosphate to 6-phosphogluconolactone. This is Glucose-6-phosphate 1-dehydrogenase from Dickeya dadantii (strain 3937) (Erwinia chrysanthemi (strain 3937)).